The following is a 224-amino-acid chain: Heme response regulator HssR (224 aa).

The Response regulatory domain occupies 3–116 (NCLIVDDDKK…ELLFRIKAVL (114 aa)). Residue Asp-52 is modified to 4-aspartylphosphate. The segment at residues 124–222 (DNELQLGNLI…VRGQGYRVDQ (99 aa)) is a DNA-binding region (ompR/PhoB-type).

Post-translationally, phosphorylated by HssS.

It localises to the cytoplasm. Functionally, member of the two-component regulatory system HssS/HssR involved in intracellular heme homeostasis and tempering of staphylococcal virulence. Phosphorylated HssR binds to a direct repeat sequence within hrtAB promoter and activates the expression of hrtAB, an efflux pump, in response to extracellular heme, hemin, hemoglobin or blood. The sequence is that of Heme response regulator HssR (hssR) from Staphylococcus epidermidis (strain ATCC 35984 / DSM 28319 / BCRC 17069 / CCUG 31568 / BM 3577 / RP62A).